Consider the following 266-residue polypeptide: tRNA pseudouridine synthase A (266 aa).

The active-site Nucleophile is D52. Y113 contacts substrate.

Belongs to the tRNA pseudouridine synthase TruA family. Homodimer.

The enzyme catalyses uridine(38/39/40) in tRNA = pseudouridine(38/39/40) in tRNA. Its function is as follows. Formation of pseudouridine at positions 38, 39 and 40 in the anticodon stem and loop of transfer RNAs. The chain is tRNA pseudouridine synthase A from Agrobacterium fabrum (strain C58 / ATCC 33970) (Agrobacterium tumefaciens (strain C58)).